The primary structure comprises 208 residues: LexA repressor (208 aa).

A DNA-binding region (H-T-H motif) is located at residues 29–49 (VREICGAVGLSSTSTVHGHIN). Residues serine 129 and lysine 167 each act as for autocatalytic cleavage activity in the active site.

It belongs to the peptidase S24 family. In terms of assembly, homodimer.

The enzyme catalyses Hydrolysis of Ala-|-Gly bond in repressor LexA.. Its function is as follows. Represses a number of genes involved in the response to DNA damage (SOS response), including recA and lexA. In the presence of single-stranded DNA, RecA interacts with LexA causing an autocatalytic cleavage which disrupts the DNA-binding part of LexA, leading to derepression of the SOS regulon and eventually DNA repair. The chain is LexA repressor from Limosilactobacillus fermentum (strain NBRC 3956 / LMG 18251) (Lactobacillus fermentum).